The chain runs to 417 residues: Cobalamin binding intrinsic factor (417 aa).

An N-terminal signal peptide occupies residues Met-1–Thr-18. Intrachain disulfides connect Cys-26-Cys-246, Cys-103-Cys-288, and Cys-143-Cys-182. A cob(II)alamin-binding site is contributed by Asp-171. Phosphoserine is present on Ser-191. Cob(II)alamin contacts are provided by Asp-222 and Gln-270. Residues Asn-311 and Asn-330 are each glycosylated (N-linked (GlcNAc...) asparagine). Cob(II)alamin contacts are provided by residues Ser-365–Val-370 and Trp-386–Leu-395. Asn-413 carries an N-linked (GlcNAc...) asparagine glycan.

Belongs to the eukaryotic cobalamin transport proteins family. In terms of assembly, interacts with CUBN (via CUB domains). In terms of tissue distribution, gastric mucosa.

The protein localises to the secreted. Functionally, promotes absorption of the essential vitamin cobalamin (Cbl) in the ileum. After interaction with CUBN, the CBLIF-cobalamin complex is internalized via receptor-mediated endocytosis. This Mus musculus (Mouse) protein is Cobalamin binding intrinsic factor (Cblif).